A 503-amino-acid chain; its full sequence is Cobyric acid synthase (503 aa).

A GATase cobBQ-type domain is found at 251-450 (DLDIAVIRLP…IHGIFENAAF (200 aa)). The active-site Nucleophile is cysteine 331. The active site involves histidine 442.

It belongs to the CobB/CobQ family. CobQ subfamily.

Its pathway is cofactor biosynthesis; adenosylcobalamin biosynthesis. Its function is as follows. Catalyzes amidations at positions B, D, E, and G on adenosylcobyrinic A,C-diamide. NH(2) groups are provided by glutamine, and one molecule of ATP is hydrogenolyzed for each amidation. The polypeptide is Cobyric acid synthase (Dehalococcoides mccartyi (strain ATCC BAA-2100 / JCM 16839 / KCTC 5957 / BAV1)).